The chain runs to 292 residues: UPF0282 protein MJ1629 (292 aa).

Belongs to the UPF0282 family.

The protein is UPF0282 protein MJ1629 of Methanocaldococcus jannaschii (strain ATCC 43067 / DSM 2661 / JAL-1 / JCM 10045 / NBRC 100440) (Methanococcus jannaschii).